Reading from the N-terminus, the 142-residue chain is uncharacterized protein (142 aa).

Positions 19–54 are disordered; sequence IHTTPHPHTPHHTHHTHTTPTPTPHPHTHTPTPERS. Positions 26-35 are enriched in basic residues; that stretch reads HTPHHTHHTH.

This is an uncharacterized protein from Saccharomyces cerevisiae (strain ATCC 204508 / S288c) (Baker's yeast).